We begin with the raw amino-acid sequence, 396 residues long: Zinc metalloproteinase nas-24 (396 aa).

The first 20 residues, 1 to 20 (MTRVVHIIGAAFLLSSYAYC), serve as a signal peptide directing secretion. Residues 44 to 230 (ERLGSKWLGG…YKINQYYGCG (187 aa)) enclose the Peptidase M12A domain. Asn-63 and Asn-79 each carry an N-linked (GlcNAc...) asparagine glycan. Cystine bridges form between Cys-82–Cys-229, Cys-105–Cys-129, Cys-231–Cys-251, and Cys-253–Cys-262. Position 137 (His-137) interacts with Zn(2+). The active site involves Glu-138. Zn(2+)-binding residues include His-141 and His-147. Positions 224 to 263 (NQYYGCGCSTQLECKNGGYTSPSDCSRCNCPKGFFGKLCN) constitute an EGF-like domain. Asn-310 carries an N-linked (GlcNAc...) asparagine glycan.

It depends on Zn(2+) as a cofactor.

It localises to the secreted. Its function is as follows. Metalloprotease. This is Zinc metalloproteinase nas-24 (nas-24) from Caenorhabditis elegans.